A 162-amino-acid chain; its full sequence is Nucleotide-binding protein Adeh_0094 (162 aa).

The protein belongs to the YajQ family.

In terms of biological role, nucleotide-binding protein. In Anaeromyxobacter dehalogenans (strain 2CP-C), this protein is Nucleotide-binding protein Adeh_0094.